The sequence spans 60 residues: Metallothionein (60 aa).

The residue at position 1 (M1) is an N-acetylmethionine. Residues 1-28 (MDPCECSKTGTCNCGGSCTCKNCSCTTC) are beta. A divalent metal cation is bound by residues C4, C6, C12, C14, C18, C20, C23, C25, C28, C32, C33, C35, C36, C40, C43, C47, C49, C54, C58, and C59. The tract at residues 29 to 60 (NKSCCPCCPSGCPKCASGCVCKGKTCDTSCCQ) is alpha.

This sequence belongs to the metallothionein superfamily. Type 1 family.

Its function is as follows. Metallothioneins have a high content of cysteine residues that bind various heavy metals. The protein is Metallothionein (mt) of Pleuronectes platessa (European plaice).